Consider the following 412-residue polypeptide: FAD-dependent monooxygenase nscC (412 aa).

An N-terminal signal peptide occupies residues 1–21 (MGKQQETILIIGAGISGLATS). Residues Glu35 and Ala46 each coordinate FAD. The N-linked (GlcNAc...) asparagine glycan is linked to Asn92. Arg119 is an FAD binding site. N-linked (GlcNAc...) asparagine glycans are attached at residues Asn170 and Asn231. Asp326 and Gly339 together coordinate FAD.

This sequence belongs to the paxM FAD-dependent monooxygenase family. FAD serves as cofactor.

Its pathway is secondary metabolite biosynthesis. Its function is as follows. FAD-dependent monooxygenase; part of the gene cluster that mediates the biosynthesis of neosartoricin B, a prenylated anthracenone that probably exhibits T-cell antiproliferative activity, suggestive of a physiological role as an immunosuppressive agent. The non-reducing polyketide synthase nscA probably synthesizes and cyclizes the decaketide backbone. The hydrolase nscB then mediates the product release through hydrolysis followed by spontaneous decarboxylation. The prenyltransferase nscD catalyzes the addition of the dimethylallyl group to the aromatic C5. The FAD-dependent monooxygenase nscC is then responsible for the stereospecific hydroxylation at C2. Neosartoricin B can be converted into two additional compounds neosartoricins C and D. Neosartoricin C is a spirocyclic compound that is cyclized through the attack of C3 hydroxyl on C14, followed by dehydration. On the other hand, neosartoricin D is a further cyclized compound in which attack of C2 on C14 in neosartoricin C results in the formation of the acetal-containing dioxabicyclo-octanone ring. Both of these compounds are novel and possibly represent related metabolites of the gene cluster. The protein is FAD-dependent monooxygenase nscC of Trichophyton tonsurans (strain CBS 112818) (Scalp ringworm fungus).